Consider the following 445-residue polypeptide: Guanosine nucleotide diphosphate dissociation inhibitor 1 (445 aa).

It belongs to the Rab GDI family. As to quaternary structure, interacts with the GDP-bound form of RABA5C (via C-terminus). Expressed in roots, rosette leaves, stems, floral buds and siliques.

Regulates the GDP/GTP exchange reaction of most RAB proteins by inhibiting the dissociation of GDP from them, and the subsequent binding of GTP. This chain is Guanosine nucleotide diphosphate dissociation inhibitor 1 (GDI1), found in Arabidopsis thaliana (Mouse-ear cress).